The primary structure comprises 326 residues: Beta-ketoacyl-[acyl-carrier-protein] synthase III (326 aa).

Residues C120 and H253 contribute to the active site. Residues 254 to 258 (QANIR) are ACP-binding. N283 is a catalytic residue.

Belongs to the thiolase-like superfamily. FabH family. In terms of assembly, homodimer.

Its subcellular location is the cytoplasm. The catalysed reaction is malonyl-[ACP] + acetyl-CoA + H(+) = 3-oxobutanoyl-[ACP] + CO2 + CoA. It participates in lipid metabolism; fatty acid biosynthesis. In terms of biological role, catalyzes the condensation reaction of fatty acid synthesis by the addition to an acyl acceptor of two carbons from malonyl-ACP. Catalyzes the first condensation reaction which initiates fatty acid synthesis and may therefore play a role in governing the total rate of fatty acid production. Possesses both acetoacetyl-ACP synthase and acetyl transacylase activities. Its substrate specificity determines the biosynthesis of branched-chain and/or straight-chain of fatty acids. The chain is Beta-ketoacyl-[acyl-carrier-protein] synthase III from Cupriavidus taiwanensis (strain DSM 17343 / BCRC 17206 / CCUG 44338 / CIP 107171 / LMG 19424 / R1) (Ralstonia taiwanensis (strain LMG 19424)).